Reading from the N-terminus, the 348-residue chain is Putative [LysW]-L-2-aminoadipate/[LysW]-L-glutamate phosphate reductase (348 aa).

9-12 (SGYV) contacts NADP(+). Cys-149 is a catalytic residue. Asn-315 contributes to the NADP(+) binding site.

It belongs to the NAGSA dehydrogenase family. Type 1 subfamily. LysY sub-subfamily.

The protein resides in the cytoplasm. The catalysed reaction is [amino-group carrier protein]-C-terminal-N-(1-carboxy-5-oxopentan-1-yl)-L-glutamine + phosphate + NADP(+) = [amino-group carrier protein]-C-terminal-N-(1-carboxy-5-phosphooxy-5-oxopentan-1-yl)-L-glutamine + NADPH + H(+). It catalyses the reaction [amino-group carrier protein]-C-terminal-gamma-(L-glutamyl-5-semialdehyde)-L-glutamate + phosphate + NADP(+) = [amino-group carrier protein]-C-terminal-gamma-(5-phospho-L-glutamyl)-L-glutamate + NADPH + H(+). The protein operates within amino-acid biosynthesis; L-lysine biosynthesis via AAA pathway; L-lysine from L-alpha-aminoadipate (Thermus route): step 3/5. It participates in amino-acid biosynthesis; L-arginine biosynthesis. Involved in both the arginine and lysine biosynthetic pathways. This chain is Putative [LysW]-L-2-aminoadipate/[LysW]-L-glutamate phosphate reductase, found in Cenarchaeum symbiosum (strain A).